Consider the following 257-residue polypeptide: Type III pantothenate kinase (257 aa).

6-13 (EQGNTNTL) serves as a coordination point for ATP. 107–110 (GADR) contacts substrate. Asp109 functions as the Proton acceptor in the catalytic mechanism. Position 129 (Asp129) interacts with K(+). Residue Thr132 participates in ATP binding. Residue Thr184 coordinates substrate.

Belongs to the type III pantothenate kinase family. As to quaternary structure, homodimer. NH4(+) serves as cofactor. The cofactor is K(+).

The protein localises to the cytoplasm. The catalysed reaction is (R)-pantothenate + ATP = (R)-4'-phosphopantothenate + ADP + H(+). It functions in the pathway cofactor biosynthesis; coenzyme A biosynthesis; CoA from (R)-pantothenate: step 1/5. Catalyzes the phosphorylation of pantothenate (Pan), the first step in CoA biosynthesis. In Phenylobacterium zucineum (strain HLK1), this protein is Type III pantothenate kinase.